The sequence spans 575 residues: Glycosyltransferase family 92 protein At1g27200 (575 aa).

A helical membrane pass occupies residues 22 to 44 (FLSQRYLILCFCCFFVLLFFLSS). The region spanning 293–540 (LCVCTMLWNQ…TEAIEPPDWK (248 aa)) is the GT92 domain.

It belongs to the glycosyltransferase 92 family.

Its subcellular location is the membrane. This chain is Glycosyltransferase family 92 protein At1g27200, found in Arabidopsis thaliana (Mouse-ear cress).